The chain runs to 473 residues: Calcium uptake protein 1, mitochondrial (473 aa).

The transit peptide at 1-33 (MFRLRFIPAVAGLAAVSRRYHGVANHARSRRRL) directs the protein to the mitochondrion. The interval 61 to 101 (SSVKHSMREETSEKEKEDADQAVESSDEDQPQEGKKKKARV) is disordered. Basic and acidic residues predominate over residues 66-79 (SMREETSEKEKEDA). Residues 80-91 (DQAVESSDEDQP) are compositionally biased toward acidic residues. Residues 96-107 (KKKARVGFRDRK) form a polybasic region region. The interval 123-126 (KIFR) is k/R-ring. An EF-hand 1 domain is found at 215-250 (TPQRNFEIAFKMFDLNGDGEVDMEEFEQVQSIIRSQ). Ca(2+)-binding residues include D228, N230, D232, E234, and E239. Positions 256-260 (RHRDR) are k/R-ring. The EF-hand 2 domain occupies 405-440 (LSDHVCDVVFALFDCDGNGELSNKEFIAIMKQRLMR). Ca(2+) is bound by residues D418, D420, N422, E424, and E429. Residues 452–462 (RLMRAMWKCAQ) are C-helix region.

This sequence belongs to the MICU1 family. MICU1 subfamily. In terms of assembly, heterodimer; disulfide-linked; heterodimerizes with micu2. Component of the uniplex complex.

It localises to the mitochondrion intermembrane space. It is found in the mitochondrion inner membrane. Functionally, calcium sensor of the mitochondrial calcium uniporter (mcu) channel, which senses calcium level via its EF-hand domains. micu1 and micu2 form a disulfide-linked heterodimer that stimulates and inhibits MCU activity, depending on the concentration of calcium. At low calcium levels, micu1 occludes the pore of the MCU channel, preventing mitochondrial calcium uptake. At higher calcium levels, calcium-binding to micu1 and micu2 induces a conformational change that weakens mcu-micu1 interactions and moves the micu1-micu2 heterodimer away from the pore, allowing calcium permeation through the mcu channel. Also required to protect against manganese toxicity by preventing manganese uptake by mcu. The sequence is that of Calcium uptake protein 1, mitochondrial (micu1) from Xenopus tropicalis (Western clawed frog).